Here is a 153-residue protein sequence, read N- to C-terminus: 6,7-dimethyl-8-ribityllumazine synthase (153 aa).

5-amino-6-(D-ribitylamino)uracil contacts are provided by residues F22, 56–58, and 80–82; these read AFE and AVI. 85–86 lines the (2S)-2-hydroxy-3-oxobutyl phosphate pocket; sequence ST. The active-site Proton donor is the H88. F113 is a binding site for 5-amino-6-(D-ribitylamino)uracil. Residue R127 coordinates (2S)-2-hydroxy-3-oxobutyl phosphate.

This sequence belongs to the DMRL synthase family.

The catalysed reaction is (2S)-2-hydroxy-3-oxobutyl phosphate + 5-amino-6-(D-ribitylamino)uracil = 6,7-dimethyl-8-(1-D-ribityl)lumazine + phosphate + 2 H2O + H(+). It functions in the pathway cofactor biosynthesis; riboflavin biosynthesis; riboflavin from 2-hydroxy-3-oxobutyl phosphate and 5-amino-6-(D-ribitylamino)uracil: step 1/2. In terms of biological role, catalyzes the formation of 6,7-dimethyl-8-ribityllumazine by condensation of 5-amino-6-(D-ribitylamino)uracil with 3,4-dihydroxy-2-butanone 4-phosphate. This is the penultimate step in the biosynthesis of riboflavin. The polypeptide is 6,7-dimethyl-8-ribityllumazine synthase (Clostridium botulinum (strain Eklund 17B / Type B)).